The following is a 155-amino-acid chain: Ribosomal RNA large subunit methyltransferase H (155 aa).

S-adenosyl-L-methionine is bound by residues Leu-72, Gly-103, and 122 to 127; that span reads LSPLTL.

Belongs to the RNA methyltransferase RlmH family. Homodimer.

It is found in the cytoplasm. It carries out the reaction pseudouridine(1915) in 23S rRNA + S-adenosyl-L-methionine = N(3)-methylpseudouridine(1915) in 23S rRNA + S-adenosyl-L-homocysteine + H(+). In terms of biological role, specifically methylates the pseudouridine at position 1915 (m3Psi1915) in 23S rRNA. In Aeromonas hydrophila subsp. hydrophila (strain ATCC 7966 / DSM 30187 / BCRC 13018 / CCUG 14551 / JCM 1027 / KCTC 2358 / NCIMB 9240 / NCTC 8049), this protein is Ribosomal RNA large subunit methyltransferase H.